The following is a 263-amino-acid chain: 3-methyl-2-oxobutanoate hydroxymethyltransferase (263 aa).

Residues aspartate 45 and aspartate 84 each contribute to the Mg(2+) site. 3-methyl-2-oxobutanoate contacts are provided by residues 45–46, aspartate 84, and lysine 112; that span reads DS. Glutamate 114 lines the Mg(2+) pocket. Glutamate 181 (proton acceptor) is an active-site residue.

The protein belongs to the PanB family. Homodecamer; pentamer of dimers. Mg(2+) serves as cofactor.

The protein resides in the cytoplasm. The enzyme catalyses 3-methyl-2-oxobutanoate + (6R)-5,10-methylene-5,6,7,8-tetrahydrofolate + H2O = 2-dehydropantoate + (6S)-5,6,7,8-tetrahydrofolate. The protein operates within cofactor biosynthesis; (R)-pantothenate biosynthesis; (R)-pantoate from 3-methyl-2-oxobutanoate: step 1/2. Its function is as follows. Catalyzes the reversible reaction in which hydroxymethyl group from 5,10-methylenetetrahydrofolate is transferred onto alpha-ketoisovalerate to form ketopantoate. This chain is 3-methyl-2-oxobutanoate hydroxymethyltransferase, found in Buchnera aphidicola subsp. Acyrthosiphon pisum (strain 5A).